A 361-amino-acid polypeptide reads, in one-letter code: Homocitrate synthase (361 aa).

Residues 1–251 (MVLDSTLREG…KYRLDLLYRV (251 aa)) enclose the Pyruvate carboxyltransferase domain. Position 8 (Arg-8) interacts with 2-oxoglutarate. Glu-9 provides a ligand contact to Mg(2+). 2-oxoglutarate is bound by residues His-68, Arg-128, and Thr-162. 2 residues coordinate Mg(2+): His-188 and His-190. Residue His-282 is the Proton acceptor of the active site.

This sequence belongs to the alpha-IPM synthase/homocitrate synthase family. Homocitrate synthase LYS20/LYS21 subfamily. The cofactor is Mg(2+). Mn(2+) serves as cofactor.

It catalyses the reaction acetyl-CoA + 2-oxoglutarate + H2O = (2R)-homocitrate + CoA + H(+). The protein operates within amino-acid biosynthesis; L-lysine biosynthesis via AAA pathway; L-alpha-aminoadipate from 2-oxoglutarate: step 1/5. In terms of biological role, catalyzes the aldol-type condensation of 2-oxoglutarate with acetyl-CoA to yield homocitrate. Carries out the first step of the alpha-aminoadipate (AAA) lysine biosynthesis pathway. This chain is Homocitrate synthase, found in Pyrococcus abyssi (strain GE5 / Orsay).